Reading from the N-terminus, the 79-residue chain is D-alanyl carrier protein (79 aa).

One can recognise a Carrier domain in the interval 1-77 (MDVKAEVIEI…KIVEGVTELR (77 aa)). Position 35 is an O-(pantetheine 4'-phosphoryl)serine (S35).

Belongs to the DltC family. 4'-phosphopantetheine is transferred from CoA to a specific serine of apo-DCP.

It localises to the cytoplasm. It functions in the pathway cell wall biogenesis; lipoteichoic acid biosynthesis. Its function is as follows. Carrier protein involved in the D-alanylation of lipoteichoic acid (LTA). The loading of thioester-linked D-alanine onto DltC is catalyzed by D-alanine--D-alanyl carrier protein ligase DltA. The DltC-carried D-alanyl group is further transferred to cell membrane phosphatidylglycerol (PG) by forming an ester bond, probably catalyzed by DltD. D-alanylation of LTA plays an important role in modulating the properties of the cell wall in Gram-positive bacteria, influencing the net charge of the cell wall. The polypeptide is D-alanyl carrier protein (Streptococcus gordonii (strain Challis / ATCC 35105 / BCRC 15272 / CH1 / DL1 / V288)).